Reading from the N-terminus, the 766-residue chain is Dolichyl pyrophosphate Glc1Man9GlcNAc2 alpha-1,3-glucosyltransferase (766 aa).

12 helical membrane-spanning segments follow: residues 6 to 26, 60 to 80, 96 to 116, 156 to 176, 190 to 210, 228 to 248, 324 to 344, 350 to 370, 395 to 415, 423 to 443, 452 to 472, and 482 to 502; these read LVLAVTAILISFKCLLIPAYV, YPPFFAYFELGLASVAHFFGF, ILIFQRFSVIFCDILYIAVCA, SIHFQYNSMLTAIFLMSLFFI, ILLNFKHIYVYYALGYVFYYL, AISLAIALLIPFCASIFPFIH, PMGTLCLVVISSMIVLTGLVI, ADFSLFAVFSAFCFFYFGYHV, ILIHLTCIASFSLFPLLFTPF, ICVSYFFIQLVFLKRVTLMPL, VASWLLMGMVEVYNTFLHKWL, and LMAISILTAIELTGLIGALIW.

This sequence belongs to the ALG6/ALG8 glucosyltransferase family.

It localises to the endoplasmic reticulum membrane. The enzyme catalyses an alpha-D-Glc-(1-&gt;3)-alpha-D-Man-(1-&gt;2)-alpha-D-Man-(1-&gt;2)-alpha-D-Man-(1-&gt;3)-[alpha-D-Man-(1-&gt;2)-alpha-D-Man-(1-&gt;3)-[alpha-D-Man-(1-&gt;2)-alpha-D-Man-(1-&gt;6)]-alpha-D-Man-(1-&gt;6)]-beta-D-Man-(1-&gt;4)-beta-D-GlcNAc-(1-&gt;4)-alpha-D-GlcNAc-diphospho-di-trans,poly-cis-dolichol + a di-trans,poly-cis-dolichyl beta-D-glucosyl phosphate = an alpha-D-Glc-(1-&gt;3)-alpha-D-Glc-(1-&gt;3)-alpha-D-Man-(1-&gt;2)-alpha-D-Man-(1-&gt;2)-alpha-D-Man-(1-&gt;3)-[alpha-D-Man-(1-&gt;2)-alpha-D-Man-(1-&gt;3)-[alpha-D-Man-(1-&gt;2)-alpha-D-Man-(1-&gt;6)]-alpha-D-Man-(1-&gt;6)]-beta-D-Man-(1-&gt;4)-beta-D-GlcNAc-(1-&gt;4)-alpha-D-GlcNAc-diphospho-di-trans,poly-cis-dolichol + a di-trans,poly-cis-dolichyl phosphate + H(+). Its pathway is protein modification; protein glycosylation. In terms of biological role, dolichyl pyrophosphate Glc1Man9GlcNAc2 alpha-1,3-glucosyltransferase that operates in the biosynthetic pathway of dolichol-linked oligosaccharides, the glycan precursors employed in protein asparagine (N)-glycosylation. The assembly of dolichol-linked oligosaccharides begins on the cytosolic side of the endoplasmic reticulum membrane and finishes in its lumen. The sequential addition of sugars to dolichol pyrophosphate produces dolichol-linked oligosaccharides containing fourteen sugars, including two GlcNAcs, nine mannoses and three glucoses. Once assembled, the oligosaccharide is transferred from the lipid to nascent proteins by oligosaccharyltransferases. In the lumen of the endoplasmic reticulum, adds the second glucose residue from dolichyl phosphate glucose (Dol-P-Glc) onto the lipid-linked oligosaccharide intermediate Glc(1)Man(9)GlcNAc(2)-PP-Dol to produce Glc(2)Man(9)GlcNAc(2)-PP-Dol. This Caenorhabditis elegans protein is Dolichyl pyrophosphate Glc1Man9GlcNAc2 alpha-1,3-glucosyltransferase.